A 156-amino-acid polypeptide reads, in one-letter code: ATP synthase subunit b (156 aa).

Residues L7–L29 traverse the membrane as a helical segment.

It belongs to the ATPase B chain family. As to quaternary structure, F-type ATPases have 2 components, F(1) - the catalytic core - and F(0) - the membrane proton channel. F(1) has five subunits: alpha(3), beta(3), gamma(1), delta(1), epsilon(1). F(0) has three main subunits: a(1), b(2) and c(10-14). The alpha and beta chains form an alternating ring which encloses part of the gamma chain. F(1) is attached to F(0) by a central stalk formed by the gamma and epsilon chains, while a peripheral stalk is formed by the delta and b chains.

The protein localises to the cell inner membrane. F(1)F(0) ATP synthase produces ATP from ADP in the presence of a proton or sodium gradient. F-type ATPases consist of two structural domains, F(1) containing the extramembraneous catalytic core and F(0) containing the membrane proton channel, linked together by a central stalk and a peripheral stalk. During catalysis, ATP synthesis in the catalytic domain of F(1) is coupled via a rotary mechanism of the central stalk subunits to proton translocation. In terms of biological role, component of the F(0) channel, it forms part of the peripheral stalk, linking F(1) to F(0). This chain is ATP synthase subunit b, found in Burkholderia pseudomallei (strain 668).